The sequence spans 533 residues: Beta-1,4-mannosyl-glycoprotein 4-beta-N-acetylglucosaminyltransferase (533 aa).

Residues 1–7 (MKMRRYK) are Cytoplasmic-facing. A helical; Signal-anchor for type II membrane protein membrane pass occupies residues 8-23 (LFLMFCMAGLCLISFL). Residues 24–533 (HFFKTLSYVT…ARGKLDEAEV (510 aa)) lie on the Lumenal side of the membrane. A disordered region spans residues 119–158 (KPGTKMLERPPPGRPEEKPEGANGSSARRPPRYLLSARER). Asparagine 141, asparagine 241, asparagine 259, and asparagine 397 each carry an N-linked (GlcNAc...) asparagine glycan. Residues 507–533 (STAAGGWRHRGPEGRPPARGKLDEAEV) form a disordered region.

The protein belongs to the glycosyltransferase 17 family. Interacts with MGAT4D.

The protein resides in the golgi apparatus membrane. It carries out the reaction N(4)-{beta-D-GlcNAc-(1-&gt;2)-alpha-D-Man-(1-&gt;3)-[beta-D-GlcNAc-(1-&gt;2)-alpha-D-Man-(1-&gt;6)]-beta-D-Man-(1-&gt;4)-beta-D-GlcNAc-(1-&gt;4)-beta-D-GlcNAc}-L-asparaginyl-[protein] + UDP-N-acetyl-alpha-D-glucosamine = N(4)-{beta-D-GlcNAc-(1-&gt;2)-alpha-D-Man-(1-&gt;3)-[beta-D-GlcNAc-(1-&gt;4)]-[beta-D-GlcNAc-(1-&gt;2)-alpha-D-Man-(1-&gt;6)]-beta-D-Man-(1-&gt;4)-beta-D-GlcNAc-(1-&gt;4)-beta-D-GlcNAc}-L-asparaginyl-[protein] + UDP + H(+). Its pathway is protein modification; protein glycosylation. Functionally, it is involved in the regulation of the biosynthesis and biological function of glycoprotein oligosaccharides. Catalyzes the addition of N-acetylglucosamine in beta 1-4 linkage to the beta-linked mannose of the trimannosyl core of N-linked sugar chains, called bisecting N-acetylglucosamine (GlcNAc). It is one of the most important enzymes involved in the regulation of the biosynthesis of glycoprotein oligosaccharides. The addition of this bisecting GlcNAc residue alters not only the composition, but also the conformation of the N-glycan. The introduction of the bisecting GlcNAc residue results in the suppression of further processing and elongation of N-glycans, precluding the formation of beta-1,6 GlcNAc branching, catalyzed by MGAT5 since it is unable to use the bisected oligosaccharide as a substrate. Addition of bisecting N-acetylglucosamine to CDH1/E-cadherin modulates CDH1 cell membrane location. Inhibits NeuAc-alpha-2,3-Gal-beta-1,4-GlcNAc- formation which modulates sialylation levels and plays a role in cell migration regulation. In brain, addition of bisecting N-acetylglucosamine to BACE1 blocks its lysosomal targeting in response to oxidative stress and further degradation which increases its location to early endosome and the APP cleavage. The protein is Beta-1,4-mannosyl-glycoprotein 4-beta-N-acetylglucosaminyltransferase of Homo sapiens (Human).